A 142-amino-acid chain; its full sequence is Large-conductance mechanosensitive channel (142 aa).

Helical transmembrane passes span 10 to 30, 40 to 60, and 86 to 106; these read FAVK…GAFG, LIMP…LFIV, and GNFI…FVMV.

Belongs to the MscL family. Homopentamer.

Its subcellular location is the cell inner membrane. Functionally, channel that opens in response to stretch forces in the membrane lipid bilayer. May participate in the regulation of osmotic pressure changes within the cell. The sequence is that of Large-conductance mechanosensitive channel from Acidovorax ebreus (strain TPSY) (Diaphorobacter sp. (strain TPSY)).